The following is an 819-amino-acid chain: FYN-binding protein 1 (819 aa).

A compositionally biased stretch (polar residues) spans 1-45; the sequence is MAKFNTGSNPTEEAATSSRPFKVAGQSSPSGIQSRKNLFDNQGNA. Residues 1–490 form a disordered region; that stretch reads MAKFNTGSNP…REKKEQELKK (490 aa). Lys3 bears the N6-acetyllysine mark. A phosphoserine mark is found at Ser28 and Ser46. Positions 69 to 79 are enriched in basic and acidic residues; sequence TYEEKPEKEPK. Residues 150–160 show a composition bias toward pro residues; that stretch reads GPKPGPAPPVP. Ser222 bears the Phosphoserine mark. Composition is skewed to basic and acidic residues over residues 237-248 and 273-285; these read PPKEDPEDKDHG and NFEE…KTDL. Ser318 is modified (phosphoserine). Composition is skewed to pro residues over residues 342–351 and 380–412; these read GPPPPKPNRP and LPPP…PRNI. The span at 439–453 shows a compositional bias: acidic residues; that stretch reads LEEEQESEGETYEDI. The residue at position 445 (Ser445) is a Phosphoserine. Residues 448 to 495 adopt a coiled-coil conformation; that stretch reads ETYEDIDSSKERDKKREKEEKKRLELERKEQKEREKKEQELKKKFKLT. Residues 454 to 489 are compositionally biased toward basic and acidic residues; it reads DSSKERDKKREKEEKKRLELERKEQKEREKKEQELK. The Nuclear localization signal motif lies at 479-493; it reads KEREKKEQELKKKFK. Residues 499–560 form the SH3 1 domain; sequence QVIHHAKACC…KTTAVEIDYD (62 aa). Tyr559 bears the Phosphotyrosine mark. A phosphoserine mark is found at Ser561 and Ser568. Residues 584–587 carry the SH2-binding; to LCP2 motif; sequence YDDV. 2 disordered regions span residues 589-635 and 649-728; these read EQDA…DEKT and KDDR…EKEE. Acidic residues predominate over residues 610–626; sequence TDDEIYDGIEEEDDDDG. Positions 615 to 618 match the SH2-binding; to FYN motif; the sequence is YDGI. A compositionally biased stretch (basic and acidic residues) spans 649–664; that stretch reads KDDRKKSIREKPKVSE. Polar residues predominate over residues 668–677; the sequence is NEGSSLPSQH. The span at 682–692 shows a compositional bias: acidic residues; sequence VGEEVYDDVDA. Tyr687 is subject to Phosphotyrosine. The short motif at 710-736 is the Nuclear localization signal element; the sequence is RAKTEEKDPKKLKKQEKEEKDLRKKFK. Residues 711–728 show a composition bias toward basic and acidic residues; that stretch reads AKTEEKDPKKLKKQEKEE. One can recognise an SH3 2 domain in the interval 736 to 804; the sequence is KYDGEIRVLY…LRSYLVDNDG (69 aa).

As to quaternary structure, part of a complex consisting of SKAP2, FYB1 and PTPNS1. Part of a complex consisting of SKAP2, FYB1 and PIRB. Part of a complex consisting of SKAP1, FYB1 and CLNK. Interacts with CLNK (via its SH2 domain); this interaction allows SKAP1 and FYB1 to recruit FYN to the complex, thus promoting the phosphorylation of CLNK by FYN. Interacts with FYN. Interacts with LCP2. Interacts with SKAP1. Interacts with SKAP2. Interacts with FASLG. Interacts with EVL. Interacts with TMEM47. Interacts with LCK. In terms of processing, T-cell receptor ligation leads to increased tyrosine phosphorylation. In terms of tissue distribution, expressed in hematopoietic tissues such as myeloid and T-cells, spleen and thymus. Not expressed in B-cells, nor in non-lymphoid tissues. FYB-130 is preferentially expressed in mature T-cells compared to FYB-120, whereas thymocytes showed a greater relative amount of FYB-120. Expressed in podocytes.

The protein resides in the cytoplasm. It localises to the nucleus. It is found in the cell junction. Its function is as follows. Acts as an adapter protein of the FYN and LCP2 signaling cascades in T-cells. May play a role in linking T-cell signaling to remodeling of the actin cytoskeleton. Modulates the expression of IL2. Involved in platelet activation. Prevents the degradation of SKAP1 and SKAP2. May be involved in high affinity immunoglobulin epsilon receptor signaling in mast cells. This is FYN-binding protein 1 (Fyb1) from Mus musculus (Mouse).